Reading from the N-terminus, the 432-residue chain is Adenylosuccinate synthetase (432 aa).

GTP is bound by residues 13-19 (GDEGKGK) and 41-43 (GHT). Residue Asp14 is the Proton acceptor of the active site. Positions 14 and 41 each coordinate Mg(2+). Residues 14–17 (DEGK), 39–42 (NAGH), Thr130, Arg144, Gln225, Thr240, and Arg304 contribute to the IMP site. The active-site Proton donor is His42. Residue 300 to 306 (AVTGRPR) coordinates substrate. GTP-binding positions include Arg306, 332-334 (KLD), and 415-417 (STG).

Belongs to the adenylosuccinate synthetase family. As to quaternary structure, homodimer. Requires Mg(2+) as cofactor.

Its subcellular location is the cytoplasm. The catalysed reaction is IMP + L-aspartate + GTP = N(6)-(1,2-dicarboxyethyl)-AMP + GDP + phosphate + 2 H(+). Its pathway is purine metabolism; AMP biosynthesis via de novo pathway; AMP from IMP: step 1/2. Plays an important role in the de novo pathway of purine nucleotide biosynthesis. Catalyzes the first committed step in the biosynthesis of AMP from IMP. The polypeptide is Adenylosuccinate synthetase (Actinobacillus pleuropneumoniae serotype 7 (strain AP76)).